A 758-amino-acid chain; its full sequence is Photosystem I P700 chlorophyll a apoprotein A1 (758 aa).

Transmembrane regions (helical) follow at residues 78-101, 164-187, 203-227, 299-317, 354-377, 393-419, 441-463, and 539-557; these read VFSAHFGQLSIIFLWLSGMYFHGA, LYCTAIGALVFAGLMLFAGWFHYH, LNHHLAGLLGLGSLSWARHQVHVSL, IAHHHLAIAILFLIAGHMY, WHAQLSINLAMLGSLTIVVAQHMY, LSLFTHHMWIGGFLIVGAAAHAAIFMV, AIISHLNWVCIFLGFHSFGLYIH, and FLVHHIHAFTIHVTVLILL. The [4Fe-4S] cluster site is built by C581 and C590. 2 helical membrane-spanning segments follow: residues 597 to 618 and 672 to 694; these read HVFLGLFWMYNSISVVIFHFSW and LSAYGLFFLGAHFVWAFSLMFLF. Position 683 (H683) interacts with chlorophyll a'. M691 and Y699 together coordinate chlorophyll a. Position 700 (W700) interacts with phylloquinone. Residues 732–753 form a helical membrane-spanning segment; sequence AVGVTHYLLGGIATTWAFFLAR.

This sequence belongs to the PsaA/PsaB family. The PsaA/B heterodimer binds the P700 chlorophyll special pair and subsequent electron acceptors. PSI consists of a core antenna complex that captures photons, and an electron transfer chain that converts photonic excitation into a charge separation. The eukaryotic PSI reaction center is composed of at least 11 subunits. It depends on P700 is a chlorophyll a/chlorophyll a' dimer, A0 is one or more chlorophyll a, A1 is one or both phylloquinones and FX is a shared 4Fe-4S iron-sulfur center. as a cofactor.

The protein resides in the plastid. Its subcellular location is the chloroplast thylakoid membrane. It catalyses the reaction reduced [plastocyanin] + hnu + oxidized [2Fe-2S]-[ferredoxin] = oxidized [plastocyanin] + reduced [2Fe-2S]-[ferredoxin]. PsaA and PsaB bind P700, the primary electron donor of photosystem I (PSI), as well as the electron acceptors A0, A1 and FX. PSI is a plastocyanin-ferredoxin oxidoreductase, converting photonic excitation into a charge separation, which transfers an electron from the donor P700 chlorophyll pair to the spectroscopically characterized acceptors A0, A1, FX, FA and FB in turn. Oxidized P700 is reduced on the lumenal side of the thylakoid membrane by plastocyanin. This is Photosystem I P700 chlorophyll a apoprotein A1 from Pisum sativum (Garden pea).